The sequence spans 402 residues: 3-dehydroquinate synthase (402 aa).

Belongs to the archaeal-type DHQ synthase family.

The enzyme catalyses 2-amino-2,3,7-trideoxy-D-lyxo-hept-6-ulosonate + NAD(+) + H2O = 3-dehydroquinate + NH4(+) + NADH + H(+). In terms of biological role, catalyzes the oxidative deamination and cyclization of 2-amino-3,7-dideoxy-D-threo-hept-6-ulosonic acid (ADH) to yield 3-dehydroquinate (DHQ), which is fed into the canonical shikimic pathway of aromatic amino acid biosynthesis. The chain is 3-dehydroquinate synthase from Methanopyrus kandleri (strain AV19 / DSM 6324 / JCM 9639 / NBRC 100938).